The sequence spans 208 residues: uncharacterized protein (208 aa).

Disordered regions lie at residues Pro91–Asp115, Gln127–Gly156, and Asn182–Lys208. The segment covering Gln127–Pro136 has biased composition (polar residues).

This is an uncharacterized protein from Rattus norvegicus (Rat).